Here is a 196-residue protein sequence, read N- to C-terminus: Probable GTP-binding protein EngB (196 aa).

The region spanning 21–195 is the EngB-type G domain; it reads DVSEICLIGR…YELINKLLGS (175 aa). GTP-binding positions include 29–36, 56–60, 75–78, 142–145, and 174–176; these read GRSNVGKS, GKTRL, DAPG, TKLD, and ISN. The Mg(2+) site is built by Ser36 and Thr58.

Belongs to the TRAFAC class TrmE-Era-EngA-EngB-Septin-like GTPase superfamily. EngB GTPase family. Mg(2+) is required as a cofactor.

Its function is as follows. Necessary for normal cell division and for the maintenance of normal septation. The sequence is that of Probable GTP-binding protein EngB from Mycoplasma capricolum subsp. capricolum (strain California kid / ATCC 27343 / NCTC 10154).